The primary structure comprises 338 residues: Glyceraldehyde-3-phosphate dehydrogenase 2 (338 aa).

Residues 11-12, D33, and R78 contribute to the NAD(+) site; that span reads RI. D-glyceraldehyde 3-phosphate-binding positions include 149 to 151, T180, 209 to 210, and R232; these read SCT and TG. C150 serves as the catalytic Nucleophile. Position 314 (N314) interacts with NAD(+).

This sequence belongs to the glyceraldehyde-3-phosphate dehydrogenase family. In terms of assembly, homotetramer.

It is found in the cytoplasm. The enzyme catalyses D-glyceraldehyde 3-phosphate + phosphate + NAD(+) = (2R)-3-phospho-glyceroyl phosphate + NADH + H(+). Its pathway is carbohydrate degradation; glycolysis; pyruvate from D-glyceraldehyde 3-phosphate: step 1/5. The sequence is that of Glyceraldehyde-3-phosphate dehydrogenase 2 (gpd2) from Agaricus bisporus (White button mushroom).